Here is a 293-residue protein sequence, read N- to C-terminus: Bifunctional protein FolD (293 aa).

Residues 165–167, threonine 192, and valine 233 contribute to the NADP(+) site; that span reads GRG.

It belongs to the tetrahydrofolate dehydrogenase/cyclohydrolase family. As to quaternary structure, homodimer.

The enzyme catalyses (6R)-5,10-methylene-5,6,7,8-tetrahydrofolate + NADP(+) = (6R)-5,10-methenyltetrahydrofolate + NADPH. It carries out the reaction (6R)-5,10-methenyltetrahydrofolate + H2O = (6R)-10-formyltetrahydrofolate + H(+). The protein operates within one-carbon metabolism; tetrahydrofolate interconversion. Catalyzes the oxidation of 5,10-methylenetetrahydrofolate to 5,10-methenyltetrahydrofolate and then the hydrolysis of 5,10-methenyltetrahydrofolate to 10-formyltetrahydrofolate. The sequence is that of Bifunctional protein FolD from Streptomyces griseus subsp. griseus (strain JCM 4626 / CBS 651.72 / NBRC 13350 / KCC S-0626 / ISP 5235).